The primary structure comprises 722 residues: MAR-binding filament-like protein 1-1 (722 aa).

Positions 1-20 (MGSSCFPQSPLSHSLFSSSS) are disordered. Residues 1 to 50 (MGSSCFPQSPLSHSLFSSSSLSSSQFTPLLFSPRNAQKCKKKMPAMACIH) constitute a chloroplast transit peptide. The transit peptide at 51 to 84 (SENQKESEFCSRRTILFVGFSVLPLLSLRANAFE) directs the protein to the thylakoid. Over 85 to 112 (GLSVDSQVKAQPQKEETEQTIQGNAENP) the chain is Lumenal, thylakoid. Residues 113–133 (FFSLLNGLGVFGSGVLGSLYA) traverse the membrane as a helical segment. The Stromal segment spans residues 134–722 (LARNEKAVSD…TQPASQQESS (589 aa)). The stretch at 146 to 679 (IESMKNKLKE…KGEILRLRTQ (534 aa)) forms a coiled coil. The interval 687 to 722 (VNNEEKVEAGEKAAVTVKRTRRRKTATQPASQQESS) is disordered. Positions 705-712 (RTRRRKTA) match the Nuclear localization signal motif.

As to quaternary structure, interacts with PTST2; the interaction is essential for the initiation of starch granules biosynthesis in leaf chloroplasts, for the correct location of the process in the stromal spaces between the thylakoid membranes, and for the association of PTST2 with the thylakoid membranes. In terms of processing, predicted to be translocated into the thylakoid by the Tat system.

The protein resides in the plastid. Its subcellular location is the chloroplast. The protein localises to the chloroplast thylakoid membrane. It is found in the chloroplast stroma. It localises to the chloroplast nucleoid. The protein resides in the nucleus. Its subcellular location is the nucleus matrix. Required for the initiation of starch granules biosynthesis in leaf chloroplasts. Anchored to the thylakoid membranes with its C-terminus facing into the stroma where it is essential for localizing PTST2 and SS4 to the stromal spaces between the thylakoid membranes in order to begin starch granule formation. Associated with leaf chloroplastic nucleoids in vivo. Binds to various chloroplastic double-stranded DNA fragments without particular sequence specificity in vitro. May function at the interface between nucleoids and thylakoids possibly by anchoring nucleoids to the thylakoid membrane system in mature chloroplasts. Likely to participate in nuclear architecture by connecting chromatin with the nuclear matrix and potentially with the nuclear envelope. In Nicotiana tabacum (Common tobacco), this protein is MAR-binding filament-like protein 1-1.